The chain runs to 578 residues: Polypeptide N-acetylgalactosaminyltransferase 4 (578 aa).

Residues 1 to 12 (MAVRWTWAGKSC) lie on the Cytoplasmic side of the membrane. Residues 13–35 (LLLALLTLAYILVEFSVSTLYAS) form a helical; Signal-anchor for type II membrane protein membrane-spanning segment. Residues 36–578 (PGAGGARELG…DKNQLWRFEK (543 aa)) are Lumenal-facing. Intrachain disulfides connect cysteine 124–cysteine 357, cysteine 348–cysteine 421, cysteine 457–cysteine 477, cysteine 503–cysteine 518, and cysteine 547–cysteine 565. A catalytic subdomain A region spans residues 134-243 (LPTTSVIIAF…TGWLEPLLER (110 aa)). Substrate is bound by residues aspartate 175 and arginine 204. Mn(2+) contacts are provided by aspartate 227 and histidine 229. Residues 303-365 (PIRSPTMAGG…PCSHVGHVFP (63 aa)) form a catalytic subdomain B region. Tryptophan 334 serves as a coordination point for substrate. Histidine 362 serves as a coordination point for Mn(2+). Tyrosine 370 serves as a coordination point for substrate. In terms of domain architecture, Ricin B-type lectin spans 444-577 (WHGAIRSMGI…LDKNQLWRFE (134 aa)). The N-linked (GlcNAc...) asparagine glycan is linked to asparagine 471.

The protein belongs to the glycosyltransferase 2 family. GalNAc-T subfamily. Mn(2+) serves as cofactor. In terms of tissue distribution, highly expressed in sublingual gland, stomach, colon, small intestine and cervix. Expressed at intermediate levels in kidney, ovary, lung and uterus. Weakly expressed in spleen, liver, heart and brain. Not expressed in submandibular and parotid glands, skeletal muscle and testis.

Its subcellular location is the golgi apparatus membrane. It carries out the reaction L-seryl-[protein] + UDP-N-acetyl-alpha-D-galactosamine = a 3-O-[N-acetyl-alpha-D-galactosaminyl]-L-seryl-[protein] + UDP + H(+). The catalysed reaction is L-threonyl-[protein] + UDP-N-acetyl-alpha-D-galactosamine = a 3-O-[N-acetyl-alpha-D-galactosaminyl]-L-threonyl-[protein] + UDP + H(+). It functions in the pathway protein modification; protein glycosylation. Catalyzes the initial reaction in O-linked oligosaccharide biosynthesis, the transfer of an N-acetyl-D-galactosamine residue to a serine or threonine residue on the protein receptor. Has a highest activity toward EA2 peptide substrate and a much lower activity with EPO-T, Muc2, Muc1a, Muc1b. The protein is Polypeptide N-acetylgalactosaminyltransferase 4 (Galnt4) of Mus musculus (Mouse).